Consider the following 641-residue polypeptide: Chaperone protein DnaK (641 aa).

Threonine 200 carries the post-translational modification Phosphothreonine; by autocatalysis. Over residues 602 to 611 (AASSKASAAS) the composition is skewed to low complexity. Positions 602 to 641 (AASSKASAASSPPPPPGAGGQKSDVIDAEFEKVDKDKPQA) are disordered. Basic and acidic residues predominate over residues 630 to 641 (EFEKVDKDKPQA).

This sequence belongs to the heat shock protein 70 family.

In terms of biological role, acts as a chaperone. The polypeptide is Chaperone protein DnaK (Methylacidiphilum infernorum (isolate V4) (Methylokorus infernorum (strain V4))).